A 734-amino-acid chain; its full sequence is Photosystem I P700 chlorophyll a apoprotein A2 (734 aa).

The next 8 helical transmembrane spans lie at 46–69, 135–158, 175–199, 273–291, 330–353, 369–395, 417–439, and 517–535; these read IFASHFGQLAIIFLWTSGNLFHVA, LYTGALFLLFLSTLSLIGGWLHLQ, LNHHLSGLFGVSSLAWTGHLVHVAI, IAHHHLAIAFIFLIAGHMY, IHFQLGLALASLGVITSLVAQHMY, AALYTHHQYIAGFIMTGAFAHGAIFFI, AIISHLSWASLFLGFHTLGLYVH, and FLVHHAIALGLHTTTLILV. Residues Cys-559 and Cys-568 each contribute to the [4Fe-4S] cluster site. The next 2 helical transmembrane spans lie at 575-596 and 643-665; these read AFYLAVFWMLNTIGWVTFYWHW and LSVWAWMFLFGHLVWATGFMFLI. Residues His-654, Met-662, and Tyr-670 each contribute to the chlorophyll a site. Residue Trp-671 participates in phylloquinone binding. The helical transmembrane segment at 707-727 threads the bilayer; it reads LVGLAHFSVGYIFTYAAFLIA.

This sequence belongs to the PsaA/PsaB family. As to quaternary structure, the PsaA/B heterodimer binds the P700 chlorophyll special pair and subsequent electron acceptors. PSI consists of a core antenna complex that captures photons, and an electron transfer chain that converts photonic excitation into a charge separation. The eukaryotic PSI reaction center is composed of at least 11 subunits. The cofactor is P700 is a chlorophyll a/chlorophyll a' dimer, A0 is one or more chlorophyll a, A1 is one or both phylloquinones and FX is a shared 4Fe-4S iron-sulfur center..

The protein resides in the plastid. The protein localises to the chloroplast thylakoid membrane. It carries out the reaction reduced [plastocyanin] + hnu + oxidized [2Fe-2S]-[ferredoxin] = oxidized [plastocyanin] + reduced [2Fe-2S]-[ferredoxin]. In terms of biological role, psaA and PsaB bind P700, the primary electron donor of photosystem I (PSI), as well as the electron acceptors A0, A1 and FX. PSI is a plastocyanin-ferredoxin oxidoreductase, converting photonic excitation into a charge separation, which transfers an electron from the donor P700 chlorophyll pair to the spectroscopically characterized acceptors A0, A1, FX, FA and FB in turn. Oxidized P700 is reduced on the lumenal side of the thylakoid membrane by plastocyanin. The protein is Photosystem I P700 chlorophyll a apoprotein A2 of Saccharum hybrid (Sugarcane).